The following is a 374-amino-acid chain: Actin-related protein 2/3 complex subunit 2B (374 aa).

Belongs to the ARPC2 family. Component of the Arp2/3 complex composed of ARP2, ARP3, ARPC1/p41-ARC, ARPC2/p34-ARC, ARPC3/p21-ARC, ARPC4/p20-ARC and ARPC5/p16-ARC. As to expression, expressed at low levels in all tissues with a relatively highest expression in inflorescences.

Its subcellular location is the cytoplasm. The protein resides in the cytoskeleton. It localises to the cell projection. Functionally, functions as actin-binding component of the Arp2/3 complex which is involved in regulation of actin polymerization and together with an activating nucleation-promoting factor (NPF) mediates the formation of branched actin networks. Seems to contact the mother actin filament. Arp2/3 complex plays a critical role in the control of cell morphogenesis via the modulation of cell polarity development. This chain is Actin-related protein 2/3 complex subunit 2B (ARPC2B), found in Arabidopsis thaliana (Mouse-ear cress).